A 162-amino-acid chain; its full sequence is Endoribonuclease YbeY (162 aa).

Zn(2+) contacts are provided by histidine 128, histidine 132, and histidine 138.

Belongs to the endoribonuclease YbeY family. Requires Zn(2+) as cofactor.

It localises to the cytoplasm. Functionally, single strand-specific metallo-endoribonuclease involved in late-stage 70S ribosome quality control and in maturation of the 3' terminus of the 16S rRNA. This chain is Endoribonuclease YbeY, found in Lactococcus lactis subsp. lactis (strain IL1403) (Streptococcus lactis).